A 378-amino-acid chain; its full sequence is Transcription factor YY2 (378 aa).

A mediates transcriptional activation region spans residues 39–113 (LETSVGQTIE…DNLLFSPEFG (75 aa)). The tract at residues 243-378 (EFTSMRPKKP…LTHVKNKNDQ (136 aa)) is mediates transcriptional repression. 4 C2H2-type zinc fingers span residues 260-284 (IACS…LHIH), 289-311 (HVCA…QLVH), 317-341 (YQCT…VRIH), and 347-371 (FVCP…ILTH).

The protein belongs to the YY transcription factor family. As to expression, weakly expressed by neuronal and glial cells in the cerebral cortex. Expressed by Purkinje cells and in the granular layers of the cerebellum. Expressed in all layers of spermatocytes in testis but not detected in sperm cells.

The protein resides in the nucleus. Functions as a multifunctional transcription factor that may exhibit positive and negative control on a large number of genes. May antagonize YY1 and function in development and differentiation. The protein is Transcription factor YY2 (Yy2) of Mus musculus (Mouse).